A 142-amino-acid chain; its full sequence is COA8 family protein CBG23705, mitochondrial (142 aa).

It belongs to the COA8 family.

It localises to the mitochondrion inner membrane. Functionally, may be required for cytochrome c complex (COX) assembly and function, COX being the terminal component of the mitochondrial respiratory chain. The chain is COA8 family protein CBG23705, mitochondrial from Caenorhabditis briggsae.